The chain runs to 506 residues: Maturase K (506 aa).

Belongs to the intron maturase 2 family. MatK subfamily.

The protein localises to the plastid. It localises to the chloroplast. Usually encoded in the trnK tRNA gene intron. Probably assists in splicing its own and other chloroplast group II introns. This is Maturase K from Trifolium willdenovii (Tomcat clover).